The following is a 195-amino-acid chain: Imidazoleglycerol-phosphate dehydratase (195 aa).

This sequence belongs to the imidazoleglycerol-phosphate dehydratase family.

It is found in the cytoplasm. The enzyme catalyses D-erythro-1-(imidazol-4-yl)glycerol 3-phosphate = 3-(imidazol-4-yl)-2-oxopropyl phosphate + H2O. The protein operates within amino-acid biosynthesis; L-histidine biosynthesis; L-histidine from 5-phospho-alpha-D-ribose 1-diphosphate: step 6/9. The protein is Imidazoleglycerol-phosphate dehydratase of Cereibacter sphaeroides (strain ATCC 17023 / DSM 158 / JCM 6121 / CCUG 31486 / LMG 2827 / NBRC 12203 / NCIMB 8253 / ATH 2.4.1.) (Rhodobacter sphaeroides).